A 175-amino-acid chain; its full sequence is Large ribosomal subunit protein uL10 (175 aa).

Belongs to the universal ribosomal protein uL10 family. In terms of assembly, part of the ribosomal stalk of the 50S ribosomal subunit. The N-terminus interacts with L11 and the large rRNA to form the base of the stalk. The C-terminus forms an elongated spine to which L12 dimers bind in a sequential fashion forming a multimeric L10(L12)X complex.

Forms part of the ribosomal stalk, playing a central role in the interaction of the ribosome with GTP-bound translation factors. This is Large ribosomal subunit protein uL10 from Synechococcus sp. (strain CC9902).